Here is a 535-residue protein sequence, read N- to C-terminus: Light-independent protochlorophyllide reductase subunit B (535 aa).

Aspartate 36 contributes to the [4Fe-4S] cluster binding site. The Proton donor role is filled by aspartate 292. Residue 428-429 (GL) participates in substrate binding. A disordered region spans residues 447 to 483 (SDDAAKAEPDQPVSNAHGHTESKTVSQGEPIASDEGG).

Belongs to the ChlB/BchB/BchZ family. Protochlorophyllide reductase is composed of three subunits; BchL, BchN and BchB. Forms a heterotetramer of two BchB and two BchN subunits. [4Fe-4S] cluster is required as a cofactor.

The catalysed reaction is chlorophyllide a + oxidized 2[4Fe-4S]-[ferredoxin] + 2 ADP + 2 phosphate = protochlorophyllide a + reduced 2[4Fe-4S]-[ferredoxin] + 2 ATP + 2 H2O. Its pathway is porphyrin-containing compound metabolism; bacteriochlorophyll biosynthesis (light-independent). Component of the dark-operative protochlorophyllide reductase (DPOR) that uses Mg-ATP and reduced ferredoxin to reduce ring D of protochlorophyllide (Pchlide) to form chlorophyllide a (Chlide). This reaction is light-independent. The NB-protein (BchN-BchB) is the catalytic component of the complex. The polypeptide is Light-independent protochlorophyllide reductase subunit B (Chlorobium phaeobacteroides (strain DSM 266 / SMG 266 / 2430)).